The chain runs to 183 residues: Dual-action ribosomal maturation protein DarP (183 aa).

The tract at residues 1-20 is disordered; the sequence is MKQKYEDWLNDVPDNQEDDE.

This sequence belongs to the DarP family.

The protein localises to the cytoplasm. Its function is as follows. Member of a network of 50S ribosomal subunit biogenesis factors which assembles along the 30S-50S interface, preventing incorrect 23S rRNA structures from forming. Promotes peptidyl transferase center (PTC) maturation. This is Dual-action ribosomal maturation protein DarP from Pectobacterium carotovorum subsp. carotovorum (strain PC1).